Here is a 236-residue protein sequence, read N- to C-terminus: Small ribosomal subunit protein uS2c (236 aa).

Belongs to the universal ribosomal protein uS2 family.

It is found in the plastid. It localises to the chloroplast. The protein is Small ribosomal subunit protein uS2c (rps2) of Ipomoea purpurea (Common morning glory).